The primary structure comprises 358 residues: DNA polymerase IV (358 aa).

The UmuC domain maps to 4–185 (IIHVDMDCFY…LPLIKIPGVG (182 aa)). Residues Asp-8 and Asp-103 each coordinate Mg(2+). Glu-104 is an active-site residue.

The protein belongs to the DNA polymerase type-Y family. As to quaternary structure, monomer. The cofactor is Mg(2+).

The protein localises to the cytoplasm. The catalysed reaction is DNA(n) + a 2'-deoxyribonucleoside 5'-triphosphate = DNA(n+1) + diphosphate. In terms of biological role, poorly processive, error-prone DNA polymerase involved in untargeted mutagenesis. Copies undamaged DNA at stalled replication forks, which arise in vivo from mismatched or misaligned primer ends. These misaligned primers can be extended by PolIV. Exhibits no 3'-5' exonuclease (proofreading) activity. May be involved in translesional synthesis, in conjunction with the beta clamp from PolIII. The protein is DNA polymerase IV of Shewanella pealeana (strain ATCC 700345 / ANG-SQ1).